The sequence spans 390 residues: LIM/homeobox protein Lhx4 (390 aa).

LIM zinc-binding domains are found at residues 28–87 (PQCA…RFGT) and 88–150 (KCTA…AKQN). The segment at residues 157-216 (AKRPRTTITAKQLETLKNAYKNSPKPARHVREQLSSETGLDMRVVQVWFQNRRAKEKRLK) is a DNA-binding region (homeobox). Residues 161-181 (RTTITAKQLETLKNAYKNSPK) form an interaction with DNA region. An interaction with 5-mCpG DNA region spans residues 199–211 (RVVQVWFQNRRAK). Disordered regions lie at residues 231–253 (VKRSRGGSKQEKESSAEDCGVSD) and 355–390 (MAGGPTSDLSTGSSVGYPDFPTSPASWLDEMDHPPF).

As to expression, transient expression in ventrolateral regions of the developing neural tube and hindbrain.

The protein localises to the nucleus. Its function is as follows. May play a critical role in the development of respiratory control mechanisms and in the normal growth and maturation of the lung. Binds preferentially to methylated DNA. The protein is LIM/homeobox protein Lhx4 (Lhx4) of Mus musculus (Mouse).